The following is a 1404-amino-acid chain: DNA-directed RNA polymerase subunit beta' (1404 aa).

4 residues coordinate Zn(2+): C60, C62, C75, and C78. Mg(2+)-binding residues include D449, D451, and D453. Zn(2+) contacts are provided by C778, C852, C859, and C862. The interval 1380-1404 is disordered; it reads LDRPLEEEEEEEIPQAIAEESDAEE. Over residues 1384-1404 the composition is skewed to acidic residues; it reads LEEEEEEEIPQAIAEESDAEE.

Belongs to the RNA polymerase beta' chain family. As to quaternary structure, the RNAP catalytic core consists of 2 alpha, 1 beta, 1 beta' and 1 omega subunit. When a sigma factor is associated with the core the holoenzyme is formed, which can initiate transcription. Mg(2+) is required as a cofactor. Zn(2+) serves as cofactor.

It catalyses the reaction RNA(n) + a ribonucleoside 5'-triphosphate = RNA(n+1) + diphosphate. DNA-dependent RNA polymerase catalyzes the transcription of DNA into RNA using the four ribonucleoside triphosphates as substrates. This Leptospira interrogans serogroup Icterohaemorrhagiae serovar Lai (strain 56601) protein is DNA-directed RNA polymerase subunit beta'.